Consider the following 90-residue polypeptide: Long neurotoxin 1 (90 aa).

A signal peptide spans 1-21 (MKTLLLTLVVVTIVCLDVGNS). Intrachain disulfides connect C24-C42, C35-C63, C48-C52, C67-C78, and C79-C84.

Belongs to the three-finger toxin family. Long-chain subfamily. Type II alpha-neurotoxin sub-subfamily. In terms of tissue distribution, expressed by the venom gland.

It localises to the secreted. Its function is as follows. Binds with high affinity to muscular (alpha-1/CHRNA1) and neuronal (alpha-7/CHRNA7) nicotinic acetylcholine receptor (nAChR) and inhibits acetylcholine from binding to the receptor, thereby impairing neuromuscular and neuronal transmission. In Austrelaps superbus (Lowland copperhead snake), this protein is Long neurotoxin 1.